A 190-amino-acid chain; its full sequence is Elongation factor P-like protein (190 aa).

This sequence belongs to the elongation factor P family.

The chain is Elongation factor P-like protein from Pseudoalteromonas translucida (strain TAC 125).